The sequence spans 316 residues: Ribonuclease HIII (316 aa).

The 216-residue stretch at 101-316 (QVIIGSDEVG…SNFQQIIKNK (216 aa)) folds into the RNase H type-2 domain. Positions 107, 108, and 211 each coordinate a divalent metal cation.

This sequence belongs to the RNase HII family. RnhC subfamily. It depends on Mn(2+) as a cofactor. Mg(2+) is required as a cofactor.

The protein localises to the cytoplasm. The catalysed reaction is Endonucleolytic cleavage to 5'-phosphomonoester.. Endonuclease that specifically degrades the RNA of RNA-DNA hybrids. The sequence is that of Ribonuclease HIII (rnhC) from Ureaplasma parvum serovar 3 (strain ATCC 700970).